The sequence spans 378 residues: Transcription factor YY2 (378 aa).

The segment at 39 to 113 (LETSVGQTIE…DNLLFSPEFG (75 aa)) is mediates transcriptional activation. Residues 243-378 (EFTSMRPKKP…LTHVKNKNDQ (136 aa)) are mediates transcriptional repression. C2H2-type zinc fingers lie at residues 260 to 284 (IACS…LHIH), 289 to 311 (HVCA…QLVH), 317 to 341 (YQCT…VRIH), and 347 to 371 (FVCP…ILTH).

Belongs to the YY transcription factor family. Weakly expressed by neuronal and glial cells in the cerebral cortex. Expressed by Purkinje cells and in the granular layers of the cerebellum. Expressed in all layers of spermatocytes in testis but not detected in sperm cells.

Its subcellular location is the nucleus. Functionally, functions as a multifunctional transcription factor that may exhibit positive and negative control on a large number of genes. May antagonize YY1 and function in development and differentiation. The polypeptide is Transcription factor YY2 (Yy2) (Mus musculus (Mouse)).